The primary structure comprises 244 residues: Glutathione S-transferase theta-2 (244 aa).

The GST N-terminal domain occupies 2–82 (GLELYLDLLS…YLSSKYQVAD (81 aa)). Glutathione-binding positions include 40–41 (HM), 53–54 (KV), 66–67 (ES), and 104–107 (DNIR). The GST C-terminal domain maps to 88 to 230 (DLQARAQVHE…AKKMLPVPPP (143 aa)).

Belongs to the GST superfamily. Theta family. In terms of assembly, homodimer. As to expression, in liver, highest expression found in central vein limiting plate hepatocytes. Also expressed in interlobular bile duct epithelial cells. In lung, expressed in club cells and ciliated cells of the bronchiolar epithelium and in type II alveolar cells of the lung parenchyma.

The protein localises to the cytoplasm. Its subcellular location is the cytosol. It is found in the nucleus. It catalyses the reaction RX + glutathione = an S-substituted glutathione + a halide anion + H(+). In terms of biological role, conjugation of reduced glutathione to a wide number of exogenous and endogenous hydrophobic electrophiles. The protein is Glutathione S-transferase theta-2 of Mus musculus (Mouse).